The following is a 105-amino-acid chain: UPF0251 protein AF_0666 (105 aa).

This sequence belongs to the UPF0251 family.

The chain is UPF0251 protein AF_0666 from Archaeoglobus fulgidus (strain ATCC 49558 / DSM 4304 / JCM 9628 / NBRC 100126 / VC-16).